A 667-amino-acid polypeptide reads, in one-letter code: Long-chain fatty acid transport protein 3 (667 aa).

Residues 3 to 23 form a helical membrane-spanning segment; that stretch reads ALLLLLPLLLLLPLLLKLDVW. The disordered stretch occupies residues 114 to 144; the sequence is TGGRRGSGRGSTEEGARVAPPAGDAAARGTT. The segment covering 130-144 has biased composition (low complexity); it reads RVAPPAGDAAARGTT. ATP contacts are provided by residues 272-276, histidine 315, threonine 412, aspartate 512, arginine 527, and lysine 619; that span reads TSGTT.

It belongs to the ATP-dependent AMP-binding enzyme family. Expressed at high levels in adrenal gland, testis and ovary. Expressed at lower levels in adult brain. Found in adrenal cortical cells, spermatocytes and interstitial cells of the testis, theca cells of the ovary, cerebral cortical neurons, and cerebellar Purkinje cells (at protein level).

Its subcellular location is the mitochondrion membrane. The catalysed reaction is a fatty acid(in) = a fatty acid(out). The enzyme catalyses a long-chain fatty acid + ATP + CoA = a long-chain fatty acyl-CoA + AMP + diphosphate. It carries out the reaction (5Z,8Z,11Z,14Z)-eicosatetraenoate + ATP + CoA = (5Z,8Z,11Z,14Z)-eicosatetraenoyl-CoA + AMP + diphosphate. It catalyses the reaction hexadecanoate + ATP + CoA = hexadecanoyl-CoA + AMP + diphosphate. The catalysed reaction is (9Z)-octadecenoate + ATP + CoA = (9Z)-octadecenoyl-CoA + AMP + diphosphate. The enzyme catalyses (9Z,12Z)-octadecadienoate + ATP + CoA = (9Z,12Z)-octadecadienoyl-CoA + AMP + diphosphate. It carries out the reaction a very long-chain fatty acid + ATP + CoA = a very long-chain fatty acyl-CoA + AMP + diphosphate. It catalyses the reaction tetracosanoate + ATP + CoA = tetracosanoyl-CoA + AMP + diphosphate. Its function is as follows. Mainly functions as an acyl-CoA ligase catalyzing the ATP-dependent formation of fatty acyl-CoA using LCFA and very-long-chain fatty acids (VLCFA) as substrates. Can mediate the levels of long-chain fatty acids (LCFA) in the cell by facilitating their transport across membranes. This chain is Long-chain fatty acid transport protein 3 (Slc27a3), found in Mus musculus (Mouse).